Reading from the N-terminus, the 497-residue chain is Probable malate:quinone oxidoreductase (497 aa).

It belongs to the MQO family. FAD serves as cofactor.

It catalyses the reaction (S)-malate + a quinone = a quinol + oxaloacetate. It functions in the pathway carbohydrate metabolism; tricarboxylic acid cycle; oxaloacetate from (S)-malate (quinone route): step 1/1. The chain is Probable malate:quinone oxidoreductase from Prochlorococcus marinus subsp. pastoris (strain CCMP1986 / NIES-2087 / MED4).